A 339-amino-acid polypeptide reads, in one-letter code: Transcription initiation factor IIB (339 aa).

The TFIIB-type zinc-finger motif lies at 39-70 (EELICPVCGSKNIIKDYERAEIVCEMCGCVLQ). 4 residues coordinate Zn(2+): Cys-43, Cys-46, Cys-62, and Cys-65. 2 consecutive repeat copies span residues 156-239 (SELD…SREL) and 250-331 (DYVP…ELTE).

The protein belongs to the TFIIB family.

Its function is as follows. Stabilizes TBP binding to an archaeal box-A promoter. Also responsible for recruiting RNA polymerase II to the pre-initiation complex (DNA-TBP-TFIIB). The protein is Transcription initiation factor IIB of Methanococcus maripaludis (strain C7 / ATCC BAA-1331).